Consider the following 236-residue polypeptide: uncharacterized protein (236 aa).

In terms of domain architecture, HTH gntR-type spans 5–73 (QSTVENAKEK…DRKGWFVTQP (69 aa)). A DNA-binding region (H-T-H motif) is located at residues 33–52 (ERELGELLGIKRMTLRQALL).

This is an uncharacterized protein from Escherichia coli O157:H7.